A 618-amino-acid polypeptide reads, in one-letter code: Proline--tRNA ligase (618 aa).

Belongs to the class-II aminoacyl-tRNA synthetase family. ProS type 1 subfamily. As to quaternary structure, homodimer.

It localises to the cytoplasm. The catalysed reaction is tRNA(Pro) + L-proline + ATP = L-prolyl-tRNA(Pro) + AMP + diphosphate. Its function is as follows. Catalyzes the attachment of proline to tRNA(Pro) in a two-step reaction: proline is first activated by ATP to form Pro-AMP and then transferred to the acceptor end of tRNA(Pro). As ProRS can inadvertently accommodate and process non-cognate amino acids such as alanine and cysteine, to avoid such errors it has two additional distinct editing activities against alanine. One activity is designated as 'pretransfer' editing and involves the tRNA(Pro)-independent hydrolysis of activated Ala-AMP. The other activity is designated 'posttransfer' editing and involves deacylation of mischarged Ala-tRNA(Pro). The misacylated Cys-tRNA(Pro) is not edited by ProRS. This chain is Proline--tRNA ligase, found in Streptococcus pyogenes serotype M3 (strain ATCC BAA-595 / MGAS315).